We begin with the raw amino-acid sequence, 473 residues long: 3-isopropylmalate dehydratase large subunit (473 aa).

The [4Fe-4S] cluster site is built by cysteine 348, cysteine 408, and cysteine 411.

It belongs to the aconitase/IPM isomerase family. LeuC type 1 subfamily. As to quaternary structure, heterodimer of LeuC and LeuD. The cofactor is [4Fe-4S] cluster.

The enzyme catalyses (2R,3S)-3-isopropylmalate = (2S)-2-isopropylmalate. Its pathway is amino-acid biosynthesis; L-leucine biosynthesis; L-leucine from 3-methyl-2-oxobutanoate: step 2/4. Functionally, catalyzes the isomerization between 2-isopropylmalate and 3-isopropylmalate, via the formation of 2-isopropylmaleate. This chain is 3-isopropylmalate dehydratase large subunit, found in Haloarcula marismortui (strain ATCC 43049 / DSM 3752 / JCM 8966 / VKM B-1809) (Halobacterium marismortui).